The sequence spans 665 residues: Dystrophia myotonica WD repeat-containing protein (665 aa).

The segment covering 1-11 (MAAGGAEGGPG) has biased composition (gly residues). 2 disordered regions span residues 1–91 (MAAG…PALP) and 100–119 (LGDPDGAGEPPSTPSGLGAG). Position 2 is an N-acetylalanine (A2). Pro residues predominate over residues 52 to 64 (PAPPQPTQPPPGP). The segment covering 65 to 76 (AAASGPGAAGPA) has biased composition (low complexity). The segment covering 77-89 (SSPPPAGPGPGPA) has biased composition (pro residues). WD repeat units follow at residues 208-248 (IDKT…TSTP), 279-318 (VGEGPLNEFAFSPDGRHLACVSQDGCLRVFHFDSMLLRGL), 321-360 (SYFGGLLCVCWSPDGRYVVTGGEDDLVTVWSFTEGRVVAR), and 363-445 (GHKS…LSPH). Disordered stretches follow at residues 380–413 (AEEAASASADGDPSGEEEEPEVTSSDTGAPVSPL), 446–506 (PSLA…SMEP), 524–564 (RDRG…RSRL), and 628–665 (DEETEAQAGQASWPRSPSKSVVEGISSQPGSSPSGTVV). A compositionally biased stretch (low complexity) spans 450–491 (RTRTLPGTPGATPPASGSSRAGETGAGPLPRSLSRSNSLPHP). S487 carries the phosphoserine modification. At R543 the chain carries Omega-N-methylarginine. A WD 5 repeat occupies 592–629 (IAQERLTVLLFLEDCIITACQEGLICTWARPGKAFTDE). Residues 634 to 646 (QAGQASWPRSPSK) are compositionally biased toward polar residues. Over residues 653-665 (SSQPGSSPSGTVV) the composition is skewed to low complexity.

As to quaternary structure, component of the USP12/DMWD/WDR48 deubiquitinating complex. Interacts with USP12; promotes its enzymatic activity. Interacts with USP46. As to expression, widely expressed in brain where it localizes to the olfactory bulb, forebrain, thalamus, hippocampus, cerebellum, cortex and hypothalamus (at protein level). Expression seems to be particularly strong in areas of high synaptic density such as the glomerular layer of the olfactory bulb, and mossy fiber terminal fields of the hippocampus (at protein level). Expressed in retina, with strongest expression in the external and internal plexiform layers (at protein level). Strongly expressed in brain and testis. Also detected at lower levels in heart, kidney, liver, lung, ovary, uterus, bladder and skeletal muscle. In testis, expression seems to be restricted to secondary spermatocytes.

The protein resides in the cytoplasm. It is found in the nucleus. The protein localises to the perikaryon. Its subcellular location is the cell projection. It localises to the dendrite. Its function is as follows. Regulator of the deubiquitinating USP12/DMWD/WDR48 complex. Functions as a cofactor that promotes USP12 enzymatic activity. The polypeptide is Dystrophia myotonica WD repeat-containing protein (Dmwd) (Mus musculus (Mouse)).